Reading from the N-terminus, the 308-residue chain is D-alanine--D-alanine ligase (308 aa).

Positions Lys-102–Glu-302 constitute an ATP-grasp domain. An ATP-binding site is contributed by Pro-128–Thr-183. Mg(2+) contacts are provided by Asp-252, Glu-269, and Asn-271.

It belongs to the D-alanine--D-alanine ligase family. Mg(2+) serves as cofactor. The cofactor is Mn(2+).

The protein localises to the cytoplasm. It catalyses the reaction 2 D-alanine + ATP = D-alanyl-D-alanine + ADP + phosphate + H(+). Its pathway is cell wall biogenesis; peptidoglycan biosynthesis. Cell wall formation. The polypeptide is D-alanine--D-alanine ligase (Sinorhizobium medicae (strain WSM419) (Ensifer medicae)).